The chain runs to 294 residues: Elongation factor Ts (294 aa).

Residues 80–83 (TDFV) form an involved in Mg(2+) ion dislocation from EF-Tu region.

Belongs to the EF-Ts family.

The protein localises to the cytoplasm. In terms of biological role, associates with the EF-Tu.GDP complex and induces the exchange of GDP to GTP. It remains bound to the aminoacyl-tRNA.EF-Tu.GTP complex up to the GTP hydrolysis stage on the ribosome. The protein is Elongation factor Ts of Listeria monocytogenes serotype 4b (strain CLIP80459).